The chain runs to 312 residues: Malate dehydrogenase (312 aa).

NAD(+) is bound by residues 12-17 (GAGFTG) and aspartate 36. Arginine 87 and arginine 93 together coordinate substrate. NAD(+) is bound by residues asparagine 100 and 123–125 (LTN). Residue asparagine 125 coordinates substrate. Serine 149 bears the Phosphoserine mark. Residue arginine 156 coordinates substrate. Histidine 180 serves as the catalytic Proton acceptor.

It belongs to the LDH/MDH superfamily. MDH type 3 family.

The catalysed reaction is (S)-malate + NAD(+) = oxaloacetate + NADH + H(+). Catalyzes the reversible oxidation of malate to oxaloacetate. In Geobacillus thermodenitrificans, this protein is Malate dehydrogenase.